The sequence spans 95 residues: Aspartyl/glutamyl-tRNA(Asn/Gln) amidotransferase subunit C (95 aa).

This sequence belongs to the GatC family. Heterotrimer of A, B and C subunits.

The catalysed reaction is L-glutamyl-tRNA(Gln) + L-glutamine + ATP + H2O = L-glutaminyl-tRNA(Gln) + L-glutamate + ADP + phosphate + H(+). The enzyme catalyses L-aspartyl-tRNA(Asn) + L-glutamine + ATP + H2O = L-asparaginyl-tRNA(Asn) + L-glutamate + ADP + phosphate + 2 H(+). Functionally, allows the formation of correctly charged Asn-tRNA(Asn) or Gln-tRNA(Gln) through the transamidation of misacylated Asp-tRNA(Asn) or Glu-tRNA(Gln) in organisms which lack either or both of asparaginyl-tRNA or glutaminyl-tRNA synthetases. The reaction takes place in the presence of glutamine and ATP through an activated phospho-Asp-tRNA(Asn) or phospho-Glu-tRNA(Gln). The sequence is that of Aspartyl/glutamyl-tRNA(Asn/Gln) amidotransferase subunit C from Rhizobium johnstonii (strain DSM 114642 / LMG 32736 / 3841) (Rhizobium leguminosarum bv. viciae).